A 601-amino-acid polypeptide reads, in one-letter code: Polypeptide N-acetylgalactosaminyltransferase 11 (601 aa).

At 1-7 the chain is on the cytoplasmic side; that stretch reads MGSAALR. A helical; Signal-anchor for type II membrane protein transmembrane segment spans residues 8–28; it reads CFCYGCLFTSVTWTLLLFIYF. N29 and N202 each carry an N-linked (GlcNAc...) asparagine glycan. Topologically, residues 29 to 601 are lumenal; it reads NFSEESQGFR…SPSQQWHLEN (573 aa). A catalytic subdomain A region spans residues 143–254; the sequence is LPMASIVICF…EMWLQPLLAP (112 aa). Residues 312 to 374 are catalytic subdomain B; the sequence is PFRSPTMAGG…PCSRVGHIFR (63 aa). The Ricin B-type lectin domain maps to 469 to 600; the sequence is RPKILQRGRL…GSPSQQWHLE (132 aa). The cysteines at positions 486 and 505 are disulfide-linked. N-linked (GlcNAc...) asparagine glycosylation is present at N508. 2 disulfide bridges follow: C529/C546 and C571/C589.

Belongs to the glycosyltransferase 2 family. GalNAc-T subfamily. Interacts with notch1. Mn(2+) is required as a cofactor. It depends on Ca(2+) as a cofactor.

It is found in the golgi apparatus membrane. The enzyme catalyses L-seryl-[protein] + UDP-N-acetyl-alpha-D-galactosamine = a 3-O-[N-acetyl-alpha-D-galactosaminyl]-L-seryl-[protein] + UDP + H(+). It catalyses the reaction L-threonyl-[protein] + UDP-N-acetyl-alpha-D-galactosamine = a 3-O-[N-acetyl-alpha-D-galactosaminyl]-L-threonyl-[protein] + UDP + H(+). The protein operates within protein modification; protein glycosylation. Functionally, polypeptide N-acetylgalactosaminyltransferase that catalyzes the initiation of protein O-linked glycosylation and is involved in left/right asymmetry by mediating O-glycosylation of NOTCH1. O-glycosylation of NOTCH1 promotes activation of NOTCH1, modulating the balance between motile and immotile (sensory) cilia at the left-right organiser (LRO). Polypeptide N-acetylgalactosaminyltransferases catalyze the transfer of an N-acetyl-D-galactosamine residue to a serine or threonine residue on the protein receptor. This is Polypeptide N-acetylgalactosaminyltransferase 11 (galnt11) from Xenopus tropicalis (Western clawed frog).